The sequence spans 305 residues: 2-oxoacid:ferredoxin oxidoreductase subunit beta (305 aa).

3 residues coordinate [4Fe-4S] cluster: Cys-12, Cys-15, and Cys-46. Thiamine diphosphate-binding positions include 44–47 (IGCS) and His-65. Asp-90 is a Mg(2+) binding site. 91-92 (GD) contributes to the thiamine diphosphate binding site. Residues Asn-118 and Val-120 each coordinate Mg(2+). Position 122-123 (122-123 (GL)) interacts with thiamine diphosphate. Position 197 (Cys-197) interacts with [4Fe-4S] cluster.

In terms of assembly, heterodimer composed of an alpha and a beta subunit. The cofactor is [4Fe-4S] cluster. Thiamine diphosphate is required as a cofactor. It depends on Mg(2+) as a cofactor.

The catalysed reaction is a 2-oxocarboxylate + 2 oxidized [2Fe-2S]-[ferredoxin] + CoA = an acyl-CoA + 2 reduced [2Fe-2S]-[ferredoxin] + CO2 + H(+). In terms of biological role, catalyzes the coenzyme A-dependent oxidative decarboxylation of different 2-oxoacids such as 2-oxoglutarate, pyruvate and 2-oxobutyrate to form their CoA derivatives. In Saccharolobus solfataricus (Sulfolobus solfataricus), this protein is 2-oxoacid:ferredoxin oxidoreductase subunit beta.